Reading from the N-terminus, the 464-residue chain is ATP synthase subunit beta (464 aa).

153 to 160 (GGAGVGKT) serves as a coordination point for ATP.

The protein belongs to the ATPase alpha/beta chains family. F-type ATPases have 2 components, CF(1) - the catalytic core - and CF(0) - the membrane proton channel. CF(1) has five subunits: alpha(3), beta(3), gamma(1), delta(1), epsilon(1). CF(0) has three main subunits: a(1), b(2) and c(9-12). The alpha and beta chains form an alternating ring which encloses part of the gamma chain. CF(1) is attached to CF(0) by a central stalk formed by the gamma and epsilon chains, while a peripheral stalk is formed by the delta and b chains.

It is found in the cell inner membrane. It carries out the reaction ATP + H2O + 4 H(+)(in) = ADP + phosphate + 5 H(+)(out). Functionally, produces ATP from ADP in the presence of a proton gradient across the membrane. The catalytic sites are hosted primarily by the beta subunits. The sequence is that of ATP synthase subunit beta from Burkholderia orbicola (strain MC0-3).